The chain runs to 178 residues: Probable inosine/xanthosine triphosphatase (178 aa).

It belongs to the YjjX NTPase family. As to quaternary structure, homodimer. Mg(2+) serves as cofactor. Mn(2+) is required as a cofactor.

It carries out the reaction XTP + H2O = XDP + phosphate + H(+). It catalyses the reaction ITP + H2O = IDP + phosphate + H(+). Its function is as follows. Phosphatase that hydrolyzes non-canonical purine nucleotides such as XTP and ITP to their respective diphosphate derivatives. Probably excludes non-canonical purines from DNA/RNA precursor pool, thus preventing their incorporation into DNA/RNA and avoiding chromosomal lesions. This chain is Probable inosine/xanthosine triphosphatase, found in Pyrobaculum aerophilum (strain ATCC 51768 / DSM 7523 / JCM 9630 / CIP 104966 / NBRC 100827 / IM2).